Reading from the N-terminus, the 86-residue chain is Small ribosomal subunit protein uS17 (86 aa).

It belongs to the universal ribosomal protein uS17 family. As to quaternary structure, part of the 30S ribosomal subunit.

Functionally, one of the primary rRNA binding proteins, it binds specifically to the 5'-end of 16S ribosomal RNA. This chain is Small ribosomal subunit protein uS17, found in Helicobacter acinonychis (strain Sheeba).